A 206-amino-acid chain; its full sequence is Photosynthetic reaction center cytochrome c-551 (206 aa).

Transmembrane regions (helical) follow at residues 10–30, 49–69, and 76–96; these read IALA…VSFL, FMGW…LGKM, and KWFL…FFSL. The heme site is built by cysteine 152, cysteine 155, histidine 156, and methionine 182.

As to quaternary structure, component of the photosynthetic reaction center. The reaction center interacts with the Fenna-Matthews-Olson (FMO, fmoA) complex. Binds 1 heme group per subunit.

The protein localises to the cell inner membrane. Its function is as follows. Monoheme cytochrome which is the immediate electron donor to P840 of the photosynthetic reaction center complex. In Chlorobaculum parvum (strain DSM 263 / NCIMB 8327) (Chlorobium vibrioforme subsp. thiosulfatophilum), this protein is Photosynthetic reaction center cytochrome c-551 (pscC).